The primary structure comprises 220 residues: Pyrrolidone-carboxylate peptidase (220 aa).

Catalysis depends on residues glutamate 80, cysteine 143, and histidine 167.

It belongs to the peptidase C15 family. Homotetramer.

It localises to the cytoplasm. It catalyses the reaction Release of an N-terminal pyroglutamyl group from a polypeptide, the second amino acid generally not being Pro.. In terms of biological role, removes 5-oxoproline from various penultimate amino acid residues except L-proline. This chain is Pyrrolidone-carboxylate peptidase (pcp), found in Thermococcus litoralis (strain ATCC 51850 / DSM 5473 / JCM 8560 / NS-C).